Here is a 193-residue protein sequence, read N- to C-terminus: dCTP deaminase (193 aa).

Residues 110–115 (RSSLAR), Asp128, 136–138 (VLE), Tyr171, Lys178, and Gln182 each bind dCTP. Catalysis depends on Glu138, which acts as the Proton donor/acceptor. The interval 170-193 (PYNSRQDAKYRGQQGAVASRIDKD) is disordered.

Belongs to the dCTP deaminase family. Homotrimer.

The catalysed reaction is dCTP + H2O + H(+) = dUTP + NH4(+). It functions in the pathway pyrimidine metabolism; dUMP biosynthesis; dUMP from dCTP (dUTP route): step 1/2. Its function is as follows. Catalyzes the deamination of dCTP to dUTP. In Yersinia enterocolitica serotype O:8 / biotype 1B (strain NCTC 13174 / 8081), this protein is dCTP deaminase.